Reading from the N-terminus, the 236-residue chain is Ribosome maturation protein SDO1 homolog (236 aa).

This sequence belongs to the SDO1/SBDS family. As to quaternary structure, crystallized in association with 70S ribosomes.

This Thermococcus kodakarensis (strain ATCC BAA-918 / JCM 12380 / KOD1) (Pyrococcus kodakaraensis (strain KOD1)) protein is Ribosome maturation protein SDO1 homolog.